Reading from the N-terminus, the 626-residue chain is Mitogen-activated protein kinase kinase kinase 3 (626 aa).

Positions 44 to 123 constitute a PB1 domain; the sequence is DVRIKFEHNG…KSLRILLLSQ (80 aa). Polar residues-rich tracts occupy residues 146-155, 165-174, and 219-232; these read QSAGDINTIY, LSVSSQNPGR, and SAEN…QSLD. 2 disordered regions span residues 146-184 and 218-262; these read QSAG…YVPE and SSAE…SDRE. The residue at position 147 (S147) is a Phosphoserine. The residue at position 166 (S166) is a Phosphoserine; by SGK1. A phosphoserine mark is found at S250 and S312. Position 337 is a phosphoserine; by SGK1 (S337). S340 is subject to Phosphoserine. Residues 362–622 enclose the Protein kinase domain; it reads WRRGKLLGQG…AEELLTHHFA (261 aa). ATP contacts are provided by residues 368 to 376 and K391; that span reads LGQGAFGRV. The Proton acceptor role is filled by D489.

It belongs to the protein kinase superfamily. STE Ser/Thr protein kinase family. MAP kinase kinase kinase subfamily. In terms of assembly, binds both upstream activators and downstream substrates in multimolecular complexes. Part of a complex with MAP2K3, RAC1 and CCM2. Interacts with MAP2K5 and SPAG9. The cofactor is Mg(2+). Phosphorylation at Ser-166 and Ser-337 by SGK1 inhibits its activity.

The enzyme catalyses L-seryl-[protein] + ATP = O-phospho-L-seryl-[protein] + ADP + H(+). It carries out the reaction L-threonyl-[protein] + ATP = O-phospho-L-threonyl-[protein] + ADP + H(+). With respect to regulation, activated by phosphorylation on Thr-530. Functionally, component of a protein kinase signal transduction cascade. Mediates activation of the NF-kappa-B, AP1 and DDIT3 transcriptional regulators. In Homo sapiens (Human), this protein is Mitogen-activated protein kinase kinase kinase 3 (MAP3K3).